The primary structure comprises 807 residues: MPKHDSLWLKSLRWIQKHLVHTIVVPQDPFADLNLDASRPLAYVMKTESLSDIAALSEITAKLGLPSPYEPLVANGVIAPRVVCLQGRKPLFGERAGNEPFLECFMRLLAVHKERPELDIQLVPVSLYWGRTPGKEDDTMKAAVFERENPTWLRKCLMILFLGRHNFVQFSNAVSLRYMADEHGTDMGIAHKLARVARVHFRRQRKVMTGPVLPNRQALFHSLLKSESLRKAIQEEAANKKISETQARETAIEYLDEIAADYSDSLVRIAERFLTWLWNKLYSGINIKGAEQVRQLHHDGHEIVYVPCHRSHMDYLLLSYILYYQGMVPPHIAAGINLNFWPAGPMFRRGGAFFIRRSFNGNKLYTAVFREYLDQLFAKGYSVEYFSEGGRSRTGRLLAPKTGMIAMTMNSVLRGIERPVTLVPVYLGYDHVMEVATYHKELSGKKKKKESVWQVFGAIRKLGNFGQGYVNFGEPITLQNFLNERAPNWRTELADDPEQKPSWLTPAVNVLANRVMTNINDAAAASSVTLTSLVLLATDQNALERSLLERQLDLYLTLLKKVPYTTYTSVAEGDGKHLVQQGLELNKFVVCADPLGEIVSIEASQAVSMTYYRNNIIHLFIVPSLIASCLTHNEQIPRQQVVSIVADFYPLLKAELFMGIKDVPAYVNQVLDFFIEQGLVVETDTLTVVPEHTSQLLLLASSVSETLQRYAIIFNLLANRPKMERSELESESHLLAQRLGALHGITAPEFYDKKLYGTLSVKLKELGYLADNQDKSNINRIRDQANSLLRPSVKQTIVASVTAEHTV.

The short motif at 308 to 313 (CHRSHM) is the HXXXXD motif element.

This sequence belongs to the GPAT/DAPAT family.

The protein localises to the cell inner membrane. The enzyme catalyses sn-glycerol 3-phosphate + an acyl-CoA = a 1-acyl-sn-glycero-3-phosphate + CoA. The protein operates within phospholipid metabolism; CDP-diacylglycerol biosynthesis; CDP-diacylglycerol from sn-glycerol 3-phosphate: step 1/3. This chain is Glycerol-3-phosphate acyltransferase, found in Shewanella baltica (strain OS195).